A 276-amino-acid polypeptide reads, in one-letter code: Undecaprenyl-diphosphatase (276 aa).

The next 7 membrane-spanning stretches (helical) occupy residues 40 to 60 (GLAF…TFFW), 98 to 118 (WLII…KDAI), 121 to 141 (IFRG…VLYY), 155 to 175 (MSFK…FPGI), 200 to 220 (FLLS…DIAT), 227 to 247 (VLLA…KLLM), and 255 to 275 (LDIF…LSVV).

Belongs to the UppP family.

It is found in the cell membrane. The catalysed reaction is di-trans,octa-cis-undecaprenyl diphosphate + H2O = di-trans,octa-cis-undecaprenyl phosphate + phosphate + H(+). Its function is as follows. Catalyzes the dephosphorylation of undecaprenyl diphosphate (UPP). The chain is Undecaprenyl-diphosphatase from Methanosphaera stadtmanae (strain ATCC 43021 / DSM 3091 / JCM 11832 / MCB-3).